A 453-amino-acid chain; its full sequence is Pup--protein ligase (453 aa).

Glu9 contributes to the Mg(2+) binding site. Arg53 contributes to the ATP binding site. Tyr55 is a binding site for Mg(2+). Residue Asp57 is the Proton acceptor of the active site. Glu63 provides a ligand contact to Mg(2+). Positions 66 and 420 each coordinate ATP.

It belongs to the Pup ligase/Pup deamidase family. Pup-conjugating enzyme subfamily.

It catalyses the reaction ATP + [prokaryotic ubiquitin-like protein]-L-glutamate + [protein]-L-lysine = ADP + phosphate + N(6)-([prokaryotic ubiquitin-like protein]-gamma-L-glutamyl)-[protein]-L-lysine.. Its pathway is protein degradation; proteasomal Pup-dependent pathway. It functions in the pathway protein modification; protein pupylation. Functionally, catalyzes the covalent attachment of the prokaryotic ubiquitin-like protein modifier Pup to the proteasomal substrate proteins, thereby targeting them for proteasomal degradation. This tagging system is termed pupylation. The ligation reaction involves the side-chain carboxylate of the C-terminal glutamate of Pup and the side-chain amino group of a substrate lysine. This chain is Pup--protein ligase, found in Kineococcus radiotolerans (strain ATCC BAA-149 / DSM 14245 / SRS30216).